The sequence spans 150 residues: Large ribosomal subunit protein uL15 (150 aa).

It belongs to the universal ribosomal protein uL15 family. As to quaternary structure, part of the 50S ribosomal subunit.

In terms of biological role, binds to the 23S rRNA. This Rickettsia typhi (strain ATCC VR-144 / Wilmington) protein is Large ribosomal subunit protein uL15.